The sequence spans 191 residues: NAD(P)H-quinone oxidoreductase subunit L, chloroplastic (191 aa).

Residues 1–46 (MSRCGSLGLYAPNALPSLSLKPRSVKSPFCITSHTKPNDTLLHNVN) constitute a chloroplast transit peptide. A run of 3 helical transmembrane segments spans residues 61–81 (TILA…ALAI), 93–113 (VVLD…PIIM), and 129–149 (YLQF…APFL).

Belongs to the NDH complex subunit L family. In terms of assembly, part of the chloroplast NDH complex, composed of a mixture of chloroplast and nucleus encoded subunits. Component of the NDH subcomplex A, at least composed of ndhH, ndhI, ndhJ, ndhK, ndhL, ndhM, ndhN and ndhO.

It localises to the plastid. The protein localises to the chloroplast thylakoid membrane. The enzyme catalyses a plastoquinone + NADH + (n+1) H(+)(in) = a plastoquinol + NAD(+) + n H(+)(out). It catalyses the reaction a plastoquinone + NADPH + (n+1) H(+)(in) = a plastoquinol + NADP(+) + n H(+)(out). Its function is as follows. NDH shuttles electrons from NAD(P)H:plastoquinone, via FMN and iron-sulfur (Fe-S) centers, to quinones in the photosynthetic chain and possibly in a chloroplast respiratory chain. The immediate electron acceptor for the enzyme in this species is believed to be plastoquinone. Couples the redox reaction to proton translocation, and thus conserves the redox energy in a proton gradient. This is NAD(P)H-quinone oxidoreductase subunit L, chloroplastic from Arabidopsis thaliana (Mouse-ear cress).